The following is a 519-amino-acid chain: Alternative NAD(P)H-ubiquinone oxidoreductase C1, chloroplastic/mitochondrial (519 aa).

Residues 1 to 52 (MAVLSSVSSLIPFSYGATRLTSKASLASRTSGFNLSSRWNSTRNSPMLYLSR) constitute a chloroplast and mitochondrion transit peptide. An FAD-binding site is contributed by 82–118 (RVCILGGGFGGLYTALRLESLVWPEDKKPQVVLVDQS). Residue 246–282 (IKVAVVGCGYAGVELAATISERLQDRGIVQSINVSKN) participates in NAD(+) binding.

This sequence belongs to the NADH dehydrogenase family. Requires FAD as cofactor. In terms of tissue distribution, flowers, roots, leaves and stems.

Its subcellular location is the mitochondrion. It is found in the mitochondrion inner membrane. The protein localises to the plastid. It localises to the chloroplast. The protein resides in the plastoglobule. The enzyme catalyses a quinone + NADH + H(+) = a quinol + NAD(+). It carries out the reaction a ubiquinone + NADH + H(+) = a ubiquinol + NAD(+). The catalysed reaction is demethylphylloquinone + NADPH + H(+) = demethylphylloquinol + NADP(+). With respect to regulation, inhibited by dicumarol. Its function is as follows. Bifunctional oxidoreductase ables to act both on prenyl naphthoquinones and on prenyl benzoquinones. May serve a respiratory function. Involved in an electron flow toward the plastoglobule plastoquinone pool. Required for plastochromanol-8 accumulation and for phylloquinone (vitamin K1) production. Probably not directly involved in cyclic or chlororespiratory electron flows under standard growth conditions, but participates in the redox metabolism of plastoquinone-9 and the tocophrol recycling-intermediate alpha-tocopherol quinone. Catalyzes the penultimate step in the biosynthesis of vitamin K1. The polypeptide is Alternative NAD(P)H-ubiquinone oxidoreductase C1, chloroplastic/mitochondrial (Arabidopsis thaliana (Mouse-ear cress)).